A 279-amino-acid polypeptide reads, in one-letter code: Urease accessory protein UreD (279 aa).

Belongs to the UreD family. In terms of assembly, ureD, UreF and UreG form a complex that acts as a GTP-hydrolysis-dependent molecular chaperone, activating the urease apoprotein by helping to assemble the nickel containing metallocenter of UreC. The UreE protein probably delivers the nickel.

The protein localises to the cytoplasm. Functionally, required for maturation of urease via the functional incorporation of the urease nickel metallocenter. This is Urease accessory protein UreD from Streptococcus thermophilus (strain CNRZ 1066).